Here is a 332-residue protein sequence, read N- to C-terminus: N-acetyl-gamma-glutamyl-phosphate reductase (332 aa).

The active site involves Cys-144.

It belongs to the NAGSA dehydrogenase family. Type 1 subfamily.

The protein localises to the cytoplasm. The catalysed reaction is N-acetyl-L-glutamate 5-semialdehyde + phosphate + NADP(+) = N-acetyl-L-glutamyl 5-phosphate + NADPH + H(+). The protein operates within amino-acid biosynthesis; L-arginine biosynthesis; N(2)-acetyl-L-ornithine from L-glutamate: step 3/4. Its function is as follows. Catalyzes the NADPH-dependent reduction of N-acetyl-5-glutamyl phosphate to yield N-acetyl-L-glutamate 5-semialdehyde. This is N-acetyl-gamma-glutamyl-phosphate reductase from Archaeoglobus fulgidus (strain ATCC 49558 / DSM 4304 / JCM 9628 / NBRC 100126 / VC-16).